Reading from the N-terminus, the 76-residue chain is U1-cyrtautoxin-As1b (76 aa).

Intrachain disulfides connect Cys-23–Cys-37, Cys-30–Cys-51, Cys-36–Cys-66, and Cys-69–Cys-76.

It belongs to the neurotoxin 21 family. Expressed by the venom gland.

It localises to the secreted. Functionally, neurotoxin with probable ion channel impairing activity. Is both paralytic and lethal, when injected into lepidopteran larvae. The sequence is that of U1-cyrtautoxin-As1b from Apomastus schlingeri (Trap-door spider).